A 325-amino-acid chain; its full sequence is Glutarate 2-hydroxylase (325 aa).

The Fe cation site is built by His-160, Asp-162, and His-292.

Belongs to the glutarate hydroxylase family. As to quaternary structure, homotetramer. The cofactor is Fe(2+).

It carries out the reaction glutarate + 2-oxoglutarate + O2 = (S)-2-hydroxyglutarate + succinate + CO2. It participates in amino-acid degradation. Its function is as follows. Acts as an alpha-ketoglutarate-dependent dioxygenase catalyzing hydroxylation of glutarate (GA) to L-2-hydroxyglutarate (L2HG). Functions in a L-lysine degradation pathway that proceeds via cadaverine, glutarate and L-2-hydroxyglutarate. This Klebsiella pneumoniae (strain 342) protein is Glutarate 2-hydroxylase.